The chain runs to 1859 residues: Y' element ATP-dependent helicase protein 1 copy 6 (1859 aa).

The Helicase ATP-binding domain occupies 861-1038 (EIYMADTPSV…LQRIGLTGLA (178 aa)). 874-881 (APPGYGKT) serves as a coordination point for ATP. The Helicase C-terminal domain maps to 1095–1244 (KLLLALFEIE…EFYGLESKKG (150 aa)). Positions 1318 to 1461 (ANASTNATTN…ATTTESTNAS (144 aa)) are enriched in low complexity. Residues 1318–1485 (ANASTNATTN…RFHPVTDINK (168 aa)) form a disordered region. Positions 1462 to 1485 (AKEDANKDGNAEDNRFHPVTDINK) are enriched in basic and acidic residues.

It belongs to the helicase family. Yeast subtelomeric Y' repeat subfamily.

In terms of biological role, catalyzes DNA unwinding and is involved in telomerase-independent telomere maintenance. The sequence is that of Y' element ATP-dependent helicase protein 1 copy 6 (YRF1-6) from Saccharomyces cerevisiae (strain ATCC 204508 / S288c) (Baker's yeast).